A 374-amino-acid polypeptide reads, in one-letter code: Aminomethyltransferase (374 aa).

The protein belongs to the GcvT family. In terms of assembly, the glycine cleavage system is composed of four proteins: P, T, L and H.

It catalyses the reaction N(6)-[(R)-S(8)-aminomethyldihydrolipoyl]-L-lysyl-[protein] + (6S)-5,6,7,8-tetrahydrofolate = N(6)-[(R)-dihydrolipoyl]-L-lysyl-[protein] + (6R)-5,10-methylene-5,6,7,8-tetrahydrofolate + NH4(+). In terms of biological role, the glycine cleavage system catalyzes the degradation of glycine. The sequence is that of Aminomethyltransferase from Edwardsiella ictaluri (strain 93-146).